The primary structure comprises 340 residues: Ketol-acid reductoisomerase (NADP(+)) (340 aa).

The KARI N-terminal Rossmann domain maps to 1 to 183 (MAITVYYDKD…GGGRTGIIET (183 aa)). NADP(+) is bound by residues 26 to 29 (FGSQ), arginine 49, serine 52, serine 54, and 84 to 87 (DEIQ). Histidine 109 is an active-site residue. An NADP(+)-binding site is contributed by glycine 135. A KARI C-terminal knotted domain is found at 184-329 (TFKAETETDL…RNLRAMMPWI (146 aa)). Mg(2+) contacts are provided by aspartate 192, glutamate 196, glutamate 228, and glutamate 232. Serine 253 contacts substrate.

Belongs to the ketol-acid reductoisomerase family. Requires Mg(2+) as cofactor.

It carries out the reaction (2R)-2,3-dihydroxy-3-methylbutanoate + NADP(+) = (2S)-2-acetolactate + NADPH + H(+). The enzyme catalyses (2R,3R)-2,3-dihydroxy-3-methylpentanoate + NADP(+) = (S)-2-ethyl-2-hydroxy-3-oxobutanoate + NADPH + H(+). The protein operates within amino-acid biosynthesis; L-isoleucine biosynthesis; L-isoleucine from 2-oxobutanoate: step 2/4. It functions in the pathway amino-acid biosynthesis; L-valine biosynthesis; L-valine from pyruvate: step 2/4. Functionally, involved in the biosynthesis of branched-chain amino acids (BCAA). Catalyzes an alkyl-migration followed by a ketol-acid reduction of (S)-2-acetolactate (S2AL) to yield (R)-2,3-dihydroxy-isovalerate. In the isomerase reaction, S2AL is rearranged via a Mg-dependent methyl migration to produce 3-hydroxy-3-methyl-2-ketobutyrate (HMKB). In the reductase reaction, this 2-ketoacid undergoes a metal-dependent reduction by NADPH to yield (R)-2,3-dihydroxy-isovalerate. The sequence is that of Ketol-acid reductoisomerase (NADP(+)) from Campylobacter jejuni (strain RM1221).